The chain runs to 70 residues: Probable ferredoxin TA0517 (70 aa).

2 consecutive 4Fe-4S ferredoxin-type domains span residues 8–36 and 37–66; these read TEMDVDRNLCNYCGACVGMCPTDAIWLDE and TVIKIHEEKCIECGFCIVGCPTGAITAEWF. [4Fe-4S] cluster is bound by residues Cys17, Cys20, Cys23, Cys27, Cys46, Cys49, Cys52, and Cys56.

[4Fe-4S] cluster is required as a cofactor.

Functionally, ferredoxins are iron-sulfur proteins that transfer electrons in a wide variety of metabolic reactions. This Thermoplasma acidophilum (strain ATCC 25905 / DSM 1728 / JCM 9062 / NBRC 15155 / AMRC-C165) protein is Probable ferredoxin TA0517.